The following is a 575-amino-acid chain: Glycine--tRNA ligase (575 aa).

Substrate contacts are provided by arginine 96 and glutamate 162. ATP is bound by residues 194–196 (RNE), 204–209 (IRLREF), 327–328 (EC), and 450–453 (GIDR). 209-213 (FTQAE) is a binding site for substrate. 446 to 450 (EPSYG) is a binding site for substrate.

It belongs to the class-II aminoacyl-tRNA synthetase family.

The protein resides in the cytoplasm. The enzyme catalyses tRNA(Gly) + glycine + ATP = glycyl-tRNA(Gly) + AMP + diphosphate. Catalyzes the attachment of glycine to tRNA(Gly). This Methanococcus maripaludis (strain C5 / ATCC BAA-1333) protein is Glycine--tRNA ligase.